Here is a 317-residue protein sequence, read N- to C-terminus: Melanocyte-stimulating hormone receptor (317 aa).

The Extracellular portion of the chain corresponds to 1-37 (MPMQGAQRRLLGSLNSTPTATPNLGLAANHTGAPCLE). Asn-29 carries an N-linked (GlcNAc...) asparagine glycan. The chain crosses the membrane as a helical span at residues 38-63 (VSIPDGLFLSLGLVSLVENVLVVAAI). Residues 64–72 (AKNRNLHSP) lie on the Cytoplasmic side of the membrane. A helical transmembrane segment spans residues 73–93 (MYCFICCLALSDLLVSGSNML). Residues 94 to 118 (ETAVILLLEAGALATRASVVQQLQN) are Extracellular-facing. A helical transmembrane segment spans residues 119–140 (TIDVLTCSSMLCSLCFLGAIAV). Residues 141 to 163 (DRYVSIFYALRYHSIVTLPRARR) lie on the Cytoplasmic side of the membrane. Residues 164–183 (AIAAIWVASVLSSTLFIAYC) form a helical membrane-spanning segment. The Extracellular segment spans residues 184–191 (DHAAVLLC). The helical transmembrane segment at 192–211 (LVVFFLAMLVLMAVLYVHML) threads the bilayer. The Cytoplasmic segment spans residues 212–240 (ARACQHAQGITRLHKRQLPAHQGFGLRGA). Residues 241–266 (ATLTILLGIFFLCWGPFFLHLMLVVL) form a helical membrane-spanning segment. At 267-279 (CPQHLTCSCIFKN) the chain is on the extracellular side. Residues 280–300 (FKVFLTLIICNTIIDPLIYAF) form a helical membrane-spanning segment. Topologically, residues 301-317 (RSQELCRTLKEVLLCSW) are cytoplasmic. Cys-315 is lipidated: S-palmitoyl cysteine.

The protein belongs to the G-protein coupled receptor 1 family. In terms of assembly, interacts with MGRN1, but does not undergo MGRN1-mediated ubiquitination; this interaction competes with GNAS-binding and thus inhibits agonist-induced cAMP production. Interacts with OPN3; the interaction results in a decrease in MC1R-mediated cAMP signaling and ultimately a decrease in melanin production in melanocytes.

The protein resides in the cell membrane. Its function is as follows. Receptor for MSH (alpha, beta and gamma) and ACTH. The activity of this receptor is mediated by G proteins which activate adenylate cyclase. Mediates melanogenesis, the production of eumelanin (black/brown) and phaeomelanin (red/yellow), via regulation of cAMP signaling in melanocytes. The polypeptide is Melanocyte-stimulating hormone receptor (MC1R) (Alouatta palliata (Mantled howler monkey)).